Here is a 280-residue protein sequence, read N- to C-terminus: RAD52 motif-containing protein 1 (280 aa).

The RRM domain occupies 18–101 (KTIFIWDIQP…SPLKVRLSTK (84 aa)).

In terms of assembly, homodimer.

It is found in the nucleus. The protein localises to the cytoplasm. The protein resides in the nucleolus. Its function is as follows. May confer resistance to the antitumor agent cisplatin. Binds to DNA and RNA. In Danio rerio (Zebrafish), this protein is RAD52 motif-containing protein 1 (rdm1).